The chain runs to 199 residues: Recombination protein RecR (199 aa).

A C4-type zinc finger spans residues C57–C72. The 97-residue stretch at S80–S176 folds into the Toprim domain.

It belongs to the RecR family.

Functionally, may play a role in DNA repair. It seems to be involved in an RecBC-independent recombinational process of DNA repair. It may act with RecF and RecO. The sequence is that of Recombination protein RecR from Lacticaseibacillus casei (strain BL23) (Lactobacillus casei).